The chain runs to 410 residues: Multifunctional CCA protein (410 aa).

ATP contacts are provided by G8 and R11. CTP contacts are provided by G8 and R11. Mg(2+) contacts are provided by E21 and D23. ATP contacts are provided by R91, R137, and R140. Positions 91, 137, and 140 each coordinate CTP. Residues 228 to 329 (TGIHSLMTLR…VKLLEQVDAF (102 aa)) enclose the HD domain.

This sequence belongs to the tRNA nucleotidyltransferase/poly(A) polymerase family. Bacterial CCA-adding enzyme type 1 subfamily. Monomer. Can also form homodimers and oligomers. The cofactor is Mg(2+). It depends on Ni(2+) as a cofactor.

The enzyme catalyses a tRNA precursor + 2 CTP + ATP = a tRNA with a 3' CCA end + 3 diphosphate. It carries out the reaction a tRNA with a 3' CCA end + 2 CTP + ATP = a tRNA with a 3' CCACCA end + 3 diphosphate. In terms of biological role, catalyzes the addition and repair of the essential 3'-terminal CCA sequence in tRNAs without using a nucleic acid template. Adds these three nucleotides in the order of C, C, and A to the tRNA nucleotide-73, using CTP and ATP as substrates and producing inorganic pyrophosphate. tRNA 3'-terminal CCA addition is required both for tRNA processing and repair. Also involved in tRNA surveillance by mediating tandem CCA addition to generate a CCACCA at the 3' terminus of unstable tRNAs. While stable tRNAs receive only 3'-terminal CCA, unstable tRNAs are marked with CCACCA and rapidly degraded. In Legionella pneumophila subsp. pneumophila (strain Philadelphia 1 / ATCC 33152 / DSM 7513), this protein is Multifunctional CCA protein.